Here is a 172-residue protein sequence, read N- to C-terminus: Adenine phosphoribosyltransferase (172 aa).

This sequence belongs to the purine/pyrimidine phosphoribosyltransferase family. Homodimer.

The protein localises to the cytoplasm. It catalyses the reaction AMP + diphosphate = 5-phospho-alpha-D-ribose 1-diphosphate + adenine. The protein operates within purine metabolism; AMP biosynthesis via salvage pathway; AMP from adenine: step 1/1. Its function is as follows. Catalyzes a salvage reaction resulting in the formation of AMP, that is energically less costly than de novo synthesis. This Clostridium botulinum (strain Loch Maree / Type A3) protein is Adenine phosphoribosyltransferase.